A 327-amino-acid chain; its full sequence is Interleukin-12 subunit beta (327 aa).

The signal sequence occupies residues 1–22; it reads MCLQQLVISWVSLVWLASPLLA. Residues 23–106 form the Ig-like C2-type domain; sequence IWELEKNVYV…LSQMLLLLHK (84 aa). C50 and C90 are oxidised to a cystine. 2 N-linked (GlcNAc...) asparagine glycosylation sites follow: N134 and N152. The Fibronectin type-III domain maps to 237–327; sequence PPKNLKMKPS…WSEWATMSCP (91 aa).

It belongs to the IL-12B family. As to quaternary structure, heterodimer with IL12A; disulfide-linked. The heterodimer is known as interleukin IL-12. Heterodimer with IL23A; disulfide-linked. The heterodimer is known as interleukin IL-23. Also secreted as a monomer. Interacts with NBR1; this interaction promotes IL-12 secretion.

It is found in the secreted. Functionally, cytokine that can act as a growth factor for activated T and NK cells, enhance the lytic activity of NK/lymphokine-activated killer cells, and stimulate the production of IFN-gamma by resting PBMC. In terms of biological role, associates with IL23A to form the IL-23 interleukin, a heterodimeric cytokine which functions in innate and adaptive immunity. IL-23 may constitute with IL-17 an acute response to infection in peripheral tissues. IL-23 binds to a heterodimeric receptor complex composed of IL12RB1 and IL23R, activates the Jak-Stat signaling cascade, stimulates memory rather than naive T-cells and promotes production of pro-inflammatory cytokines. IL-23 induces autoimmune inflammation and thus may be responsible for autoimmune inflammatory diseases and may be important for tumorigenesis. The polypeptide is Interleukin-12 subunit beta (IL12B) (Marmota monax (Woodchuck)).